A 388-amino-acid chain; its full sequence is Chorismate synthase (388 aa).

NADP(+)-binding residues include Arg-39 and Arg-45. Residues 132 to 134, 251 to 252, Gly-296, 311 to 315, and Arg-337 each bind FMN; these read RSS, NA, and KPIPT.

It belongs to the chorismate synthase family. As to quaternary structure, homotetramer. FMNH2 serves as cofactor.

It carries out the reaction 5-O-(1-carboxyvinyl)-3-phosphoshikimate = chorismate + phosphate. The protein operates within metabolic intermediate biosynthesis; chorismate biosynthesis; chorismate from D-erythrose 4-phosphate and phosphoenolpyruvate: step 7/7. In terms of biological role, catalyzes the anti-1,4-elimination of the C-3 phosphate and the C-6 proR hydrogen from 5-enolpyruvylshikimate-3-phosphate (EPSP) to yield chorismate, which is the branch point compound that serves as the starting substrate for the three terminal pathways of aromatic amino acid biosynthesis. This reaction introduces a second double bond into the aromatic ring system. The chain is Chorismate synthase from Staphylococcus aureus (strain Mu50 / ATCC 700699).